Here is a 471-residue protein sequence, read N- to C-terminus: Chromosomal replication initiator protein DnaA (471 aa).

A domain I, interacts with DnaA modulators region spans residues 1–77; it reads MELNSSFWTL…YTEISDTYGK (77 aa). Positions 77–130 are domain II; that stretch reads KPFEVEFSITGNKINSHIETSTTPDEVLSGSEILQAQLARAQNIQPTQPRSSSD. A domain III, AAA+ region region spans residues 131 to 349; that stretch reads TLNSELTFST…GNLKKVKMFS (219 aa). Residues G176, G178, K179, and T180 each coordinate ATP. The interval 350 to 471 is domain IV, binds dsDNA; the sequence is ELQGLPIDHE…EQRIHNITRV (122 aa).

It belongs to the DnaA family. Oligomerizes as a right-handed, spiral filament on DNA at oriC.

The protein resides in the cytoplasm. In terms of biological role, plays an essential role in the initiation and regulation of chromosomal replication. ATP-DnaA binds to the origin of replication (oriC) to initiate formation of the DNA replication initiation complex once per cell cycle. Binds the DnaA box (a 9 base pair repeat at the origin) and separates the double-stranded (ds)DNA. Forms a right-handed helical filament on oriC DNA; dsDNA binds to the exterior of the filament while single-stranded (ss)DNA is stabiized in the filament's interior. The ATP-DnaA-oriC complex binds and stabilizes one strand of the AT-rich DNA unwinding element (DUE), permitting loading of DNA polymerase. After initiation quickly degrades to an ADP-DnaA complex that is not apt for DNA replication. Binds acidic phospholipids. This chain is Chromosomal replication initiator protein DnaA, found in Bdellovibrio bacteriovorus (strain ATCC 15356 / DSM 50701 / NCIMB 9529 / HD100).